The chain runs to 498 residues: ATP synthase subunit beta, chloroplastic (498 aa).

Gly172–Thr179 contributes to the ATP binding site.

It belongs to the ATPase alpha/beta chains family. In terms of assembly, F-type ATPases have 2 components, CF(1) - the catalytic core - and CF(0) - the membrane proton channel. CF(1) has five subunits: alpha(3), beta(3), gamma(1), delta(1), epsilon(1). CF(0) has four main subunits: a(1), b(1), b'(1) and c(9-12).

It localises to the plastid. The protein resides in the chloroplast thylakoid membrane. The enzyme catalyses ATP + H2O + 4 H(+)(in) = ADP + phosphate + 5 H(+)(out). In terms of biological role, produces ATP from ADP in the presence of a proton gradient across the membrane. The catalytic sites are hosted primarily by the beta subunits. This chain is ATP synthase subunit beta, chloroplastic, found in Phalaenopsis aphrodite subsp. formosana (Moth orchid).